The sequence spans 844 residues: 3',5'-cyclic-AMP phosphodiesterase 4A (844 aa).

The disordered stretch occupies residues 1–124; the sequence is MEPPAAPSER…RSPLDSQASP (124 aa). Position 13 is a phosphoserine (serine 13). Residues 36–46 are compositionally biased toward low complexity; sequence QPRTPIRIQQR. Positions 51–78 are enriched in basic and acidic residues; the sequence is SAERSETERSPHRPIERADAVDTGDRPG. Residues 82–91 show a composition bias toward polar residues; it reads TRMSWPSSFH. Position 147 is a phosphoserine; by MAPKAPK2 (serine 147). Phosphoserine is present on residues serine 152, serine 160, and serine 204. Residues 296–317 form a disordered region; the sequence is PSPTPRQRAFQQPPPSVLRQSQ. A Phosphoserine modification is found at serine 333. Positions 343-672 constitute a PDEase domain; the sequence is VKTDQEDLLA…DWYHSAIRQS (330 aa). Residue lysine 344 forms a Glycyl lysine isopeptide (Lys-Gly) (interchain with G-Cter in SUMO) linkage. Residue histidine 419 is the Proton donor of the active site. Histidine 419 serves as a coordination point for 3',5'-cyclic AMP. Positions 419 and 423 each coordinate AMP. Histidine 423, histidine 459, aspartate 460, and aspartate 577 together coordinate Zn(2+). Positions 460, 577, 628, and 631 each coordinate AMP. Aspartate 460 is a binding site for Mg(2+). Aspartate 460 is a Mn(2+) binding site. 3',5'-cyclic AMP contacts are provided by glutamine 628 and phenylalanine 631. Disordered stretches follow at residues 668 to 690 and 818 to 844; these read AIRQSPSPPLEEEPGGLGHPSLP and SACSGTSGDNSAIISAPGRWGSGGDPA. A phosphoserine mark is found at serine 672 and serine 674. Residues 820–830 show a composition bias toward polar residues; it reads CSGTSGDNSAI.

It belongs to the cyclic nucleotide phosphodiesterase family. PDE4 subfamily. Interacts with LYN (via SH3 domain). Interacts with ARRB2. Zn(2+) serves as cofactor. Mg(2+) is required as a cofactor. The cofactor is Mn(2+). Phosphorylated by MAPKAPK2 at Ser-147; it counteracts PKA-induced activation of PDE4A and modulates intracellular cAMP levels. Likely involved in cellular desensitization to cAMP signaling. In terms of processing, proteolytically cleaved by CASP3. As to expression, isoform 2 is testis specific.

The protein localises to the cytoplasm. It localises to the cytosol. It is found in the membrane. The enzyme catalyses 3',5'-cyclic AMP + H2O = AMP + H(+). The protein operates within purine metabolism; 3',5'-cyclic AMP degradation; AMP from 3',5'-cyclic AMP: step 1/1. With respect to regulation, inhibited by rolipram. Its function is as follows. Hydrolyzes the second messenger 3',5'-cyclic AMP (cAMP), which is a key regulator of many important physiological processes. Functionally, efficiently hydrolyzes cAMP. The sequence is that of 3',5'-cyclic-AMP phosphodiesterase 4A (Pde4a) from Rattus norvegicus (Rat).